A 113-amino-acid polypeptide reads, in one-letter code: Histidine triad nucleotide-binding protein (113 aa).

Residues cysteine 5 and cysteine 8 each contribute to the Zn(2+) site. One can recognise an HIT domain in the interval isoleucine 6 to leucine 113. Aspartate 31 is an AMP binding site. Histidine 47 lines the Zn(2+) pocket. The AMP site is built by asparagine 86, glycine 92, and threonine 94. Histidine 97 is a binding site for Zn(2+). Residues histidine 97–histidine 101 carry the Histidine triad motif motif. Residues histidine 99 and histidine 101 each contribute to the AMP site. Histidine 99 serves as the catalytic Tele-AMP-histidine intermediate.

This sequence belongs to the HINT family.

It is found in the nucleus. The protein resides in the cytoplasm. It catalyses the reaction adenosine 5'-phosphoramidate + H2O = AMP + NH4(+). Hydrolyzes purine nucleotide phosphoramidates with a single phosphate group, including adenosine 5'monophosphoramidate (AMP-NH2), adenosine 5'monophosphomorpholidate (AMP-morpholidate) and guanosine 5'monophosphomorpholidate (GMP-morpholidate). Hydrolyzes lysyl-AMP (AMP-N-epsilon-(N-alpha-acetyl lysine methyl ester)) generated by lysine tRNA ligase, as well as Met-AMP, His-AMP and Asp-AMP, lysyl-GMP (GMP-N-epsilon-(N-alpha-acetyl lysine methyl ester)) and AMP-N-alanine methyl ester. May also function as scaffolding protein that mediates protein-protein interactions. This chain is Histidine triad nucleotide-binding protein, found in Entamoeba histolytica (strain ATCC 30459 / HM-1:IMSS / ABRM).